The primary structure comprises 599 residues: Aspartate--tRNA(Asp/Asn) ligase (599 aa).

Glu172 provides a ligand contact to L-aspartate. Residues 196–199 are aspartate; that stretch reads QLFK. Arg218 is a binding site for L-aspartate. Residues 218–220 and Gln227 each bind ATP; that span reads RDE. An L-aspartate-binding site is contributed by His454. An ATP-binding site is contributed by Glu488. Arg495 provides a ligand contact to L-aspartate. An ATP-binding site is contributed by 540 to 543; sequence GLDR.

It belongs to the class-II aminoacyl-tRNA synthetase family. Type 1 subfamily. As to quaternary structure, homodimer.

It localises to the cytoplasm. It carries out the reaction tRNA(Asx) + L-aspartate + ATP = L-aspartyl-tRNA(Asx) + AMP + diphosphate. Aspartyl-tRNA synthetase with relaxed tRNA specificity since it is able to aspartylate not only its cognate tRNA(Asp) but also tRNA(Asn). Reaction proceeds in two steps: L-aspartate is first activated by ATP to form Asp-AMP and then transferred to the acceptor end of tRNA(Asp/Asn). The polypeptide is Aspartate--tRNA(Asp/Asn) ligase (Methylibium petroleiphilum (strain ATCC BAA-1232 / LMG 22953 / PM1)).